A 442-amino-acid polypeptide reads, in one-letter code: MMNTDETIFALSTVFGKSGVAVIRISGNHALKALNHFHVNKDMKPRFATLVDLYDSSDQLIDNGIAIYFPAPNSFTGEDVIELQVHGGKAVIKIVLEELSRIFVMAKPGEFLLRAFLNGKFDLTQIEGIADLIDAETKMQAKQAIKQMSGELEKLYSSWRQRLIAVQSKIEAYIDFPEDVATEKNELEKINDEVQTLVQSIQEHLNDNRRGERLREGLHIVITGEPNVGKSTLFNFLARRDIAIVSEYVGTTRDILEAHIDIGGYPIILSDTAGIRESSDPVESEGISRAKKRSCEADLRIELFPFEQRYNINCNVISSNTIYVLSKADDVINDHDIKISDIDFLPVSILKGIGTEKLVSVIKEKVEEKFVYDRDVPVITRQRHRNCMQKAIEHLRRFNMNNPIELVSEDLRLAASELGVVTGIINVEEVLDDIFNNFCVGK.

(6S)-5-formyl-5,6,7,8-tetrahydrofolate is bound by residues Arg24, Glu82, and Lys120. One can recognise a TrmE-type G domain in the interval 217-367; it reads GLHIVITGEP…LVSVIKEKVE (151 aa). GTP contacts are provided by residues 227 to 232, 246 to 252, and 271 to 274; these read NVGKST, SEYVGTT, and DTAG. Mg(2+) is bound by residues Ser231 and Thr252. Lys442 lines the (6S)-5-formyl-5,6,7,8-tetrahydrofolate pocket.

This sequence belongs to the TRAFAC class TrmE-Era-EngA-EngB-Septin-like GTPase superfamily. TrmE GTPase family. As to quaternary structure, homodimer. Heterotetramer of two MnmE and two MnmG subunits. K(+) is required as a cofactor.

It is found in the cytoplasm. Its function is as follows. Exhibits a very high intrinsic GTPase hydrolysis rate. Involved in the addition of a carboxymethylaminomethyl (cmnm) group at the wobble position (U34) of certain tRNAs, forming tRNA-cmnm(5)s(2)U34. The polypeptide is tRNA modification GTPase MnmE (Wolbachia sp. subsp. Brugia malayi (strain TRS)).